We begin with the raw amino-acid sequence, 256 residues long: MNDIWWQTYGEGNCHLVLLHGWGLNAEVWHCIREELGSHFTLHLVDLPGYGRSSGFGAMTLEEMTAQVAKNAPDQAIWLGWSLGGLVASQMAFTHPERVQALVTVASSPCFSAREGWPGIKPEILGGFQQQLSDDFQRTVERFLALQTLGTETARQDARTLKSVVLAQPMPDVEVLNGGLEILKTVDLREALKNVNMPFLRLYGYLDGLVPRKIAPLLDTLWPHSTSQIMEKAAHAPFISHPAAFCQALMTLKSSL.

The region spanning 15-242 is the AB hydrolase-1 domain; that stretch reads HLVLLHGWGL…AAHAPFISHP (228 aa). Residues Trp22, 82–83, and 143–147 contribute to the substrate site; these read SL and FLALQ. Residue Ser82 is the Nucleophile of the active site. Active-site residues include Asp207 and His235. His235 contributes to the substrate binding site.

Belongs to the AB hydrolase superfamily. Carboxylesterase BioH family. In terms of assembly, monomer.

It is found in the cytoplasm. The catalysed reaction is 6-carboxyhexanoyl-[ACP] methyl ester + H2O = 6-carboxyhexanoyl-[ACP] + methanol + H(+). Its pathway is cofactor biosynthesis; biotin biosynthesis. The physiological role of BioH is to remove the methyl group introduced by BioC when the pimeloyl moiety is complete. It allows to synthesize pimeloyl-ACP via the fatty acid synthetic pathway through the hydrolysis of the ester bonds of pimeloyl-ACP esters. This is Pimeloyl-[acyl-carrier protein] methyl ester esterase from Salmonella newport (strain SL254).